Consider the following 389-residue polypeptide: Chalcone synthase 1A (389 aa).

Cys-164 is an active-site residue.

Belongs to the thiolase-like superfamily. Chalcone/stilbene synthases family.

The catalysed reaction is (E)-4-coumaroyl-CoA + 3 malonyl-CoA + 3 H(+) = 2',4,4',6'-tetrahydroxychalcone + 3 CO2 + 4 CoA. The protein operates within secondary metabolite biosynthesis; flavonoid biosynthesis. Functionally, the primary product of this enzyme is 4,2',4',6'-tetrahydroxychalcone (also termed naringenin-chalcone or chalcone) which can under specific conditions spontaneously isomerize into naringenin. The polypeptide is Chalcone synthase 1A (CHS1A) (Solanum tuberosum (Potato)).